The primary structure comprises 374 residues: MKAILALEDGTYFEGTSFTGPGESGGEAIFNTGMTGYQEVLTDPSYTGQMVCMTYPLIGNYGITKEDIESAKVHVAAFIVKECCKHPSNWRSVMSLPEYLKEAGVMGIEGIDTRALTRHLRINGAMRGIISTEELDPEKLVAKAKQLPTMEGQNLADTVTSETCYAWQDGKPVPVDVSSGYKWSDKGPRLVLVDYGVKWNILRLLDEQGFEVLSVPSHYSEEQVRALEPDAIFLSNGPGDPAVLDQAVKNAKSYCEDLPVAGICLGHQILGQALGGKAFKLKFGHHGCNHPVMDMESKKIEISSQNHGFCVDISDCSDLKITHKNLNDETLEGFAHKTKPIIAIQFHPEAAPGPHDSCYFFARFRNLVKDATGK.

Residues 1–185 (MKAILALEDG…DVSSGYKWSD (185 aa)) form a CPSase region. Ser45, Gly237, and Gly239 together coordinate L-glutamine. A Glutamine amidotransferase type-1 domain is found at 189 to 374 (RLVLVDYGVK…RNLVKDATGK (186 aa)). Cys264 serves as the catalytic Nucleophile. L-glutamine contacts are provided by Leu265, Gln268, Asn306, Gly308, and Phe309. Active-site residues include His347 and Glu349.

Belongs to the CarA family. In terms of assembly, composed of two chains; the small (or glutamine) chain promotes the hydrolysis of glutamine to ammonia, which is used by the large (or ammonia) chain to synthesize carbamoyl phosphate. Tetramer of heterodimers (alpha,beta)4.

The catalysed reaction is hydrogencarbonate + L-glutamine + 2 ATP + H2O = carbamoyl phosphate + L-glutamate + 2 ADP + phosphate + 2 H(+). It catalyses the reaction L-glutamine + H2O = L-glutamate + NH4(+). The protein operates within amino-acid biosynthesis; L-arginine biosynthesis; carbamoyl phosphate from bicarbonate: step 1/1. It functions in the pathway pyrimidine metabolism; UMP biosynthesis via de novo pathway; (S)-dihydroorotate from bicarbonate: step 1/3. Its function is as follows. Small subunit of the glutamine-dependent carbamoyl phosphate synthetase (CPSase). CPSase catalyzes the formation of carbamoyl phosphate from the ammonia moiety of glutamine, carbonate, and phosphate donated by ATP, constituting the first step of 2 biosynthetic pathways, one leading to arginine and/or urea and the other to pyrimidine nucleotides. The small subunit (glutamine amidotransferase) binds and cleaves glutamine to supply the large subunit with the substrate ammonia. The chain is Carbamoyl phosphate synthase small chain from Maridesulfovibrio salexigens (strain ATCC 14822 / DSM 2638 / NCIMB 8403 / VKM B-1763) (Desulfovibrio salexigens).